The primary structure comprises 375 residues: Histidine biosynthesis bifunctional protein HisB (375 aa).

The histidinol-phosphatase stretch occupies residues 1–168 (MTPILFVDRD…GIAHELADAP (168 aa)). Asp-8 serves as the catalytic Nucleophile. The Mg(2+) site is built by Asp-8, Asp-10, and Asp-128. Asp-10 acts as the Proton donor in catalysis. The tract at residues 169–375 (RRAVVQRNTK…SALPTTKGAL (207 aa)) is imidazoleglycerol-phosphate dehydratase.

The protein in the N-terminal section; belongs to the histidinol-phosphatase family. This sequence in the C-terminal section; belongs to the imidazoleglycerol-phosphate dehydratase family. The cofactor is Mg(2+).

The protein localises to the cytoplasm. It carries out the reaction D-erythro-1-(imidazol-4-yl)glycerol 3-phosphate = 3-(imidazol-4-yl)-2-oxopropyl phosphate + H2O. The catalysed reaction is L-histidinol phosphate + H2O = L-histidinol + phosphate. Its pathway is amino-acid biosynthesis; L-histidine biosynthesis; L-histidine from 5-phospho-alpha-D-ribose 1-diphosphate: step 6/9. It participates in amino-acid biosynthesis; L-histidine biosynthesis; L-histidine from 5-phospho-alpha-D-ribose 1-diphosphate: step 8/9. This chain is Histidine biosynthesis bifunctional protein HisB, found in Xanthomonas oryzae pv. oryzae (strain MAFF 311018).